The primary structure comprises 628 residues: Probable potassium transport system protein Kup 1 (628 aa).

The next 12 membrane-spanning stretches (helical) occupy residues 18-38 (ITLA…LYAL), 58-78 (IVSL…VLLV), 106-126 (ALLM…AVIT), 141-161 (ITPE…VILF), 175-195 (FGPI…YEIV), 219-239 (IAFI…ALYA), 253-273 (WGSL…ALLL), 285-305 (LLAP…ATVI), 343-363 (IYLP…IIWF), 371-391 (AAYG…LMVV), 401-421 (WLIA…FAAN), and 425-445 (FLAG…VMTT).

This sequence belongs to the HAK/KUP transporter (TC 2.A.72) family.

The protein localises to the cell inner membrane. It catalyses the reaction K(+)(in) + H(+)(in) = K(+)(out) + H(+)(out). Its function is as follows. Transport of potassium into the cell. Likely operates as a K(+):H(+) symporter. The polypeptide is Probable potassium transport system protein Kup 1 (Aeromonas hydrophila subsp. hydrophila (strain ATCC 7966 / DSM 30187 / BCRC 13018 / CCUG 14551 / JCM 1027 / KCTC 2358 / NCIMB 9240 / NCTC 8049)).